We begin with the raw amino-acid sequence, 496 residues long: Rhamnulokinase (496 aa).

13 to 17 is an ATP binding site; the sequence is ASSGR. Residues glycine 83 and 236-238 each bind substrate; that span reads HDT. Residue aspartate 237 is the Proton acceptor of the active site. An ATP-binding site is contributed by threonine 259. Asparagine 296 contacts substrate. An ATP-binding site is contributed by glutamine 304. A disulfide bridge connects residues cysteine 353 and cysteine 370. An ATP-binding site is contributed by glycine 402. The cysteines at positions 413 and 417 are disulfide-linked.

This sequence belongs to the rhamnulokinase family. Mg(2+) serves as cofactor.

It carries out the reaction L-rhamnulose + ATP = L-rhamnulose 1-phosphate + ADP + H(+). The protein operates within carbohydrate degradation; L-rhamnose degradation; glycerone phosphate from L-rhamnose: step 2/3. Functionally, involved in the catabolism of L-rhamnose (6-deoxy-L-mannose). Catalyzes the transfer of the gamma-phosphate group from ATP to the 1-hydroxyl group of L-rhamnulose to yield L-rhamnulose 1-phosphate. In Pectobacterium atrosepticum (strain SCRI 1043 / ATCC BAA-672) (Erwinia carotovora subsp. atroseptica), this protein is Rhamnulokinase.